A 164-amino-acid polypeptide reads, in one-letter code: Ion-translocating oxidoreductase complex subunit G (164 aa).

FMN phosphoryl threonine is present on T125.

This sequence belongs to the RnfG family. As to quaternary structure, the complex is composed of six subunits: RnfA, RnfB, RnfC, RnfD, RnfE and RnfG. FMN serves as cofactor.

Its function is as follows. Part of a membrane-bound complex that couples electron transfer with translocation of ions across the membrane. The protein is Ion-translocating oxidoreductase complex subunit G of Buchnera aphidicola subsp. Acyrthosiphon pisum (strain APS) (Acyrthosiphon pisum symbiotic bacterium).